We begin with the raw amino-acid sequence, 232 residues long: U-scoloptoxin(11)-Ssd2a (232 aa).

The first 21 residues, 1-21 (MFQFCLLILLLAPGRFFSALG), serve as a signal peptide directing secretion. A propeptide spanning residues 22-32 (KPQETLTVENR) is cleaved from the precursor.

Post-translationally, contains 8 disulfide bonds. In terms of tissue distribution, expressed by the venom gland.

The protein localises to the secreted. The sequence is that of U-scoloptoxin(11)-Ssd2a from Scolopendra dehaani (Thai centipede).